Consider the following 73-residue polypeptide: Putative membrane protein insertion efficiency factor (73 aa).

It belongs to the UPF0161 family.

Its subcellular location is the cell inner membrane. Functionally, could be involved in insertion of integral membrane proteins into the membrane. This is Putative membrane protein insertion efficiency factor from Neisseria meningitidis serogroup C / serotype 2a (strain ATCC 700532 / DSM 15464 / FAM18).